A 119-amino-acid chain; its full sequence is Large ribosomal subunit protein uL22c (119 aa).

Belongs to the universal ribosomal protein uL22 family. As to quaternary structure, part of the 50S ribosomal subunit.

The protein resides in the plastid. It is found in the chloroplast. Functionally, this protein binds specifically to 23S rRNA. The globular domain of the protein is located near the polypeptide exit tunnel on the outside of the subunit, while an extended beta-hairpin is found that lines the wall of the exit tunnel in the center of the 70S ribosome. This chain is Large ribosomal subunit protein uL22c (rpl22), found in Marchantia polymorpha (Common liverwort).